The sequence spans 296 residues: 6-hydroxypseudooxynicotine dehydrogenase complex subunit alpha (296 aa).

Residues 1 to 177 enclose the FAD-binding PCMH-type domain; sequence MKPPSFDYVV…VEVNVPQLPH (177 aa). FAD is bound by residues 30 to 37, 111 to 115, and E124; these read IIAGGQSL and TIGGS.

In terms of assembly, heterohexamer of 2 alpha (kdhA), 2 beta (kdhB) and 2 gamma (kdhC) subunit. Dimer of heterotrimers. Requires FAD as cofactor.

It catalyses the reaction 6-hydroxypseudooxynicotine + A + H2O = 2,6-dihydroxypseudooxynicotine + AH2. It functions in the pathway alkaloid degradation; nicotine degradation. Molybdo-flavoprotein enzyme complex involved in nicotine degradation. The subunit gamma (large subunit) contains the substrate-binding sites, the subunit alpha (medium subunit) binds FAD and the subunit beta (small subunit) has a 2Fe-2S ferredoxin-type domain which binds 2 2Fe-2S clusters. This Paenarthrobacter nicotinovorans (Arthrobacter nicotinovorans) protein is 6-hydroxypseudooxynicotine dehydrogenase complex subunit alpha (kdhA).